The chain runs to 347 residues: 4-hydroxy-2-oxovalerate aldolase 1 (347 aa).

Residues 11-263 (VVLHDMCLRD…ETGVDLFKLM (253 aa)) form the Pyruvate carboxyltransferase domain. 19 to 20 (RD) is a binding site for substrate. Asp-20 contributes to the Mn(2+) binding site. His-23 serves as the catalytic Proton acceptor. Substrate is bound by residues Ser-173 and His-202. Mn(2+)-binding residues include His-202 and His-204. Position 293 (Tyr-293) interacts with substrate.

This sequence belongs to the 4-hydroxy-2-oxovalerate aldolase family.

The enzyme catalyses (S)-4-hydroxy-2-oxopentanoate = acetaldehyde + pyruvate. The chain is 4-hydroxy-2-oxovalerate aldolase 1 (lapG) from Azoarcus sp. (strain BH72).